The chain runs to 72 residues: Translation initiation factor IF-1 (72 aa).

The S1-like domain maps to 1 to 72 (MAKEDCIEMQ…SKARIIFRAR (72 aa)).

It belongs to the IF-1 family. In terms of assembly, component of the 30S ribosomal translation pre-initiation complex which assembles on the 30S ribosome in the order IF-2 and IF-3, IF-1 and N-formylmethionyl-tRNA(fMet); mRNA recruitment can occur at any time during PIC assembly.

Its subcellular location is the cytoplasm. Its function is as follows. One of the essential components for the initiation of protein synthesis. Stabilizes the binding of IF-2 and IF-3 on the 30S subunit to which N-formylmethionyl-tRNA(fMet) subsequently binds. Helps modulate mRNA selection, yielding the 30S pre-initiation complex (PIC). Upon addition of the 50S ribosomal subunit IF-1, IF-2 and IF-3 are released leaving the mature 70S translation initiation complex. This is Translation initiation factor IF-1 from Haemophilus ducreyi (strain 35000HP / ATCC 700724).